The following is a 604-amino-acid chain: Serine/threonine-protein kinase A-Raf (604 aa).

One can recognise an RBD domain in the interval 19–91 (GTVKVYLPNK…DGEELIVEVL (73 aa)). The Phorbol-ester/DAG-type zinc finger occupies 98–144 (MHNFVRKTFFSLAFCDFCLKFLFHGFRCQTCGYKFHQHCSSKVPTVC). Zn(2+) is bound by residues H99, C112, C115, C125, C128, H133, C136, and C144. Phosphoserine occurs at positions 157 and 162. 2 disordered regions span residues 177–222 (NELL…HMVS) and 241–288 (TDAA…EKKK). Phosphothreonine is present on T181. At S186 the chain carries Phosphoserine. Residues 210–222 (IRSTSTPNVHMVS) show a composition bias toward polar residues. The segment covering 252–265 (PRGSPSPASVSSGR) has biased composition (low complexity). 2 positions are modified to phosphoserine: S255 and S267. A compositionally biased stretch (basic and acidic residues) spans 272–287 (LPSEQRERKSLADEKK). Residues 308-568 (VQLLKRIGTG…PQILATIELL (261 aa)) enclose the Protein kinase domain. Residues 314-322 (IGTGSFGTV) and K334 contribute to the ATP site. The residue at position 316 (T316) is a Phosphothreonine. The active-site Proton acceptor is the D427.

This sequence belongs to the protein kinase superfamily. TKL Ser/Thr protein kinase family. RAF subfamily. As to quaternary structure, interacts with TH1L/NELFD. The cofactor is Zn(2+). Dephosphorylation by the SHOC2-MRAS-PP1c (SMP) complex consisting of SHOC2, GTP-bound M-Ras/MRAS and the catalytic subunit of protein phosphatase 1 (PPP1CA, PPP1CB or PPP1CC); this relieves inactivation and stimulates kinase activity.

The enzyme catalyses L-seryl-[protein] + ATP = O-phospho-L-seryl-[protein] + ADP + H(+). It catalyses the reaction L-threonyl-[protein] + ATP = O-phospho-L-threonyl-[protein] + ADP + H(+). Involved in the transduction of mitogenic signals from the cell membrane to the nucleus. May also regulate the TOR signaling cascade. Phosphorylates PFKFB2. In Mus musculus (Mouse), this protein is Serine/threonine-protein kinase A-Raf (Araf).